A 376-amino-acid polypeptide reads, in one-letter code: MARVEL domain-containing protein 3 (376 aa).

Basic and acidic residues predominate over residues 1 to 95 (MKNTSGHREP…EKSRQSRARP (95 aa)). The tract at residues 1-134 (MKNTSGHREP…GRRGLESERA (134 aa)) is disordered. The Cytoplasmic portion of the chain corresponds to 1-173 (MKNTSGHREP…HKCRYLCTGR (173 aa)). The MARVEL domain maps to 168–361 (YLCTGRACWQ…GAVLAFRGYR (194 aa)). A helical transmembrane segment spans residues 174-194 (ACWQMLKALLNLLILACSSVS). Residues 195-247 (YNSTGGYTGITSLGGIYYYQYGGAYSGFDGADGERAQQLDVQFYQLKLPTVTA) are Extracellular-facing. The helical transmembrane segment at 248-268 (AMAYSGALMTFSCLTLLAGAL) threads the bilayer. The Cytoplasmic portion of the chain corresponds to 269 to 275 (RVPWHCP). The helical transmembrane segment at 276-296 (LWLVIEGLMDALIAGAYVPGL) threads the bilayer. Topologically, residues 297-335 (YFFFQHLSAAYSSDVCKERETLYQSKGYSGFNCGVHGGD) are extracellular. A helical membrane pass occupies residues 336–356 (IGAGVFAAMAIGVFAVGAVLA). Residues 357 to 376 (FRGYRKVKKLKEKPTEMLEF) are Cytoplasmic-facing.

In terms of tissue distribution, widely expressed with highest levels in small intestine, colon, stomach and lung. Liver expresses only isoform 2.

It localises to the membrane. Its subcellular location is the cell junction. It is found in the tight junction. As a component of tight junctions, plays a role in paracellular ion conductivity. This is MARVEL domain-containing protein 3 (Marveld3) from Mus musculus (Mouse).